The sequence spans 382 residues: GDSL esterase/lipase At4g01130 (382 aa).

An N-terminal signal peptide occupies residues 1 to 28 (MASDINRRRSFSLLVLIIVMLYGHKGDS). The active-site Nucleophile is S41. N-linked (GlcNAc...) asparagine glycans are attached at residues N118, N263, N275, and N330. Residues D348 and H351 contribute to the active site.

The protein belongs to the 'GDSL' lipolytic enzyme family.

The protein resides in the secreted. This chain is GDSL esterase/lipase At4g01130, found in Arabidopsis thaliana (Mouse-ear cress).